We begin with the raw amino-acid sequence, 350 residues long: Putative ankyrin repeat protein RBE_0589 (350 aa).

ANK repeat units follow at residues 81–110, 114–151, and 153–182; these read DGFTLLHKSINERDYNIAGFLLERKANPNI, DIVTPLNRIAGKPLSKTEEDFHMAKLLLQKGALTEPTD, and SGWTPIQYAVFNEKIGIVELLIDYGANLDI.

The protein is Putative ankyrin repeat protein RBE_0589 of Rickettsia bellii (strain RML369-C).